The sequence spans 385 residues: MDPFRFQVEARAGRARVGRLFTPHGAVETPLFMPVGTAGSVKGLMPKDLEAIGSQVLLANTYHLLLRPGPERVRALGGLHGFAGWKGPWLTDSGGFQVMSLGHMRRIDEEGVVFQSHLDGRLIKLTPERSIAVQEALGADLIMAFDECPPYPSPREYLEASLERTLRWLERSLKAKTRPDQALFGIAQGGTDPELRRRSTLETIRFDLPGYAIGGLAVGEPKEAMFAMVELSTRLLPEDRPRYLMGVGHPEDLVAAMGLGVDLFDCVYPTRTGRFGSALVPEGRLNLKNARFLEDRRPLEEGCDCYTCQTFGRAYLAHLVRAGEMLGGILLSLHNLRHLHRLTEAARQAIREGRYGDFAREFARRRFGREVPPWFREALAAGGHW.

The active-site Proton acceptor is the aspartate 92. Substrate is bound by residues 92 to 96, aspartate 146, glutamine 188, and glycine 215; that span reads DSGGF. Positions 246–252 are RNA binding; sequence GVGHPED. Catalysis depends on aspartate 265, which acts as the Nucleophile. The tract at residues 270–274 is RNA binding; important for wobble base 34 recognition; sequence TRTGR. The Zn(2+) site is built by cysteine 303, cysteine 305, cysteine 308, and histidine 334.

This sequence belongs to the queuine tRNA-ribosyltransferase family. As to quaternary structure, homodimer. Within each dimer, one monomer is responsible for RNA recognition and catalysis, while the other monomer binds to the replacement base PreQ1. Requires Zn(2+) as cofactor.

It carries out the reaction 7-aminomethyl-7-carbaguanine + guanosine(34) in tRNA = 7-aminomethyl-7-carbaguanosine(34) in tRNA + guanine. The protein operates within tRNA modification; tRNA-queuosine biosynthesis. Its function is as follows. Catalyzes the base-exchange of a guanine (G) residue with the queuine precursor 7-aminomethyl-7-deazaguanine (PreQ1) at position 34 (anticodon wobble position) in tRNAs with GU(N) anticodons (tRNA-Asp, -Asn, -His and -Tyr). Catalysis occurs through a double-displacement mechanism. The nucleophile active site attacks the C1' of nucleotide 34 to detach the guanine base from the RNA, forming a covalent enzyme-RNA intermediate. The proton acceptor active site deprotonates the incoming PreQ1, allowing a nucleophilic attack on the C1' of the ribose to form the product. After dissociation, two additional enzymatic reactions on the tRNA convert PreQ1 to queuine (Q), resulting in the hypermodified nucleoside queuosine (7-(((4,5-cis-dihydroxy-2-cyclopenten-1-yl)amino)methyl)-7-deazaguanosine). The protein is Queuine tRNA-ribosyltransferase of Thermus thermophilus (strain ATCC BAA-163 / DSM 7039 / HB27).